We begin with the raw amino-acid sequence, 321 residues long: Ornithine carbamoyltransferase (321 aa).

Residues 53-56 (STRT), Gln80, Arg104, and 131-134 (HPCQ) contribute to the carbamoyl phosphate site. L-ornithine is bound by residues Asn166, Asp230, and 234–235 (SM). Residues 270–271 (CL) and Arg298 each bind carbamoyl phosphate.

It belongs to the aspartate/ornithine carbamoyltransferase superfamily. OTCase family.

Its subcellular location is the cytoplasm. The catalysed reaction is carbamoyl phosphate + L-ornithine = L-citrulline + phosphate + H(+). It functions in the pathway amino-acid biosynthesis; L-arginine biosynthesis; L-arginine from L-ornithine and carbamoyl phosphate: step 1/3. Functionally, reversibly catalyzes the transfer of the carbamoyl group from carbamoyl phosphate (CP) to the N(epsilon) atom of ornithine (ORN) to produce L-citrulline. The protein is Ornithine carbamoyltransferase of Bifidobacterium longum (strain NCC 2705).